The following is a 368-amino-acid chain: tRNA-cytidine(32) 2-sulfurtransferase (368 aa).

The short motif at 95 to 100 (SGGKDS) is the PP-loop motif element. Positions 170, 173, and 261 each coordinate [4Fe-4S] cluster.

The protein belongs to the TtcA family. As to quaternary structure, homodimer. It depends on Mg(2+) as a cofactor. The cofactor is [4Fe-4S] cluster.

It is found in the cytoplasm. It carries out the reaction cytidine(32) in tRNA + S-sulfanyl-L-cysteinyl-[cysteine desulfurase] + AH2 + ATP = 2-thiocytidine(32) in tRNA + L-cysteinyl-[cysteine desulfurase] + A + AMP + diphosphate + H(+). The protein operates within tRNA modification. Its function is as follows. Catalyzes the ATP-dependent 2-thiolation of cytidine in position 32 of tRNA, to form 2-thiocytidine (s(2)C32). The sulfur atoms are provided by the cysteine/cysteine desulfurase (IscS) system. The sequence is that of tRNA-cytidine(32) 2-sulfurtransferase from Psychrobacter sp. (strain PRwf-1).